We begin with the raw amino-acid sequence, 54 residues long: Large ribosomal subunit protein bL32 (54 aa).

The segment at 1–54 is disordered; the sequence is MAVQQNRKTRSRRGMRRSHDALTAAQLSVDSTSGETHRRHHVTADGYYRGKKVI. Basic residues predominate over residues 7–16; sequence RKTRSRRGMR. The segment covering 25–34 has biased composition (polar residues); that stretch reads AQLSVDSTSG.

Belongs to the bacterial ribosomal protein bL32 family.

The chain is Large ribosomal subunit protein bL32 from Tolumonas auensis (strain DSM 9187 / NBRC 110442 / TA 4).